A 275-amino-acid chain; its full sequence is Adenosylcobinamide-GDP ribazoletransferase (275 aa).

Transmembrane regions (helical) follow at residues 52–72, 73–93, 126–146, 181–201, 208–228, and 251–271; these read VVGV…GVLG, VTPL…NRMM, MGFS…AALV, FGAM…LVAL, VAVW…GIIA, and IGAG…VAVA.

The protein belongs to the CobS family. The cofactor is Mg(2+).

The protein resides in the cell membrane. The catalysed reaction is alpha-ribazole + adenosylcob(III)inamide-GDP = adenosylcob(III)alamin + GMP + H(+). The enzyme catalyses alpha-ribazole 5'-phosphate + adenosylcob(III)inamide-GDP = adenosylcob(III)alamin 5'-phosphate + GMP + H(+). Its pathway is cofactor biosynthesis; adenosylcobalamin biosynthesis; adenosylcobalamin from cob(II)yrinate a,c-diamide: step 7/7. In terms of biological role, joins adenosylcobinamide-GDP and alpha-ribazole to generate adenosylcobalamin (Ado-cobalamin). Also synthesizes adenosylcobalamin 5'-phosphate from adenosylcobinamide-GDP and alpha-ribazole 5'-phosphate. In Corynebacterium efficiens (strain DSM 44549 / YS-314 / AJ 12310 / JCM 11189 / NBRC 100395), this protein is Adenosylcobinamide-GDP ribazoletransferase.